The chain runs to 202 residues: Glycoprotein U22 (202 aa).

Residues 1-20 (MVPQGCSLVWVSALYVSVIA) form the signal peptide. 4 N-linked (GlcNAc...) asparagine; by host glycosylation sites follow: asparagine 54, asparagine 107, asparagine 112, and asparagine 125. A helical membrane pass occupies residues 172-192 (FVYYCISVYLFAVVVLCSCWF).

Its subcellular location is the membrane. The sequence is that of Glycoprotein U22 (U22) from Homo sapiens (Human).